A 285-amino-acid chain; its full sequence is Ribose-phosphate pyrophosphokinase (285 aa).

Residues D33–E35 and R91–Q92 each bind ATP. Residues H125 and D162 each coordinate Mg(2+). The active site involves K185. D-ribose 5-phosphate is bound by residues R187, D211, and S215–T219.

The protein belongs to the ribose-phosphate pyrophosphokinase family. Class III (archaeal) subfamily. Requires Mg(2+) as cofactor.

It is found in the cytoplasm. It carries out the reaction D-ribose 5-phosphate + ATP = 5-phospho-alpha-D-ribose 1-diphosphate + AMP + H(+). Its pathway is metabolic intermediate biosynthesis; 5-phospho-alpha-D-ribose 1-diphosphate biosynthesis; 5-phospho-alpha-D-ribose 1-diphosphate from D-ribose 5-phosphate (route I): step 1/1. Involved in the biosynthesis of the central metabolite phospho-alpha-D-ribosyl-1-pyrophosphate (PRPP) via the transfer of pyrophosphoryl group from ATP to 1-hydroxyl of ribose-5-phosphate (Rib-5-P). In Methanothermobacter thermautotrophicus (strain ATCC 29096 / DSM 1053 / JCM 10044 / NBRC 100330 / Delta H) (Methanobacterium thermoautotrophicum), this protein is Ribose-phosphate pyrophosphokinase.